A 128-amino-acid polypeptide reads, in one-letter code: Probable 4-amino-4-deoxy-L-arabinose-phosphoundecaprenol flippase subunit ArnF (128 aa).

Over 1 to 2 (MG) the chain is Cytoplasmic. Residues 3–23 (LMWGLFSVIIASVAQLSLGFA) form a helical membrane-spanning segment. Topologically, residues 24-35 (ASHLPPMTHLWD) are periplasmic. The helical transmembrane segment at 36 to 56 (FIAALLAFGLDARILLLGLLG) threads the bilayer. The Cytoplasmic segment spans residues 57–76 (YLLSVFCWYKTLHKLALSKA). The helical transmembrane segment at 77–97 (YALLSMSYVLVWIASMVLPGW) threads the bilayer. Residues 98-100 (EGT) are Periplasmic-facing. A helical transmembrane segment spans residues 101–121 (FSLKALLGVACIMSGLMLIFL). The Cytoplasmic segment spans residues 122-128 (PTTKQRY).

The protein belongs to the ArnF family. Heterodimer of ArnE and ArnF.

It localises to the cell inner membrane. Its pathway is bacterial outer membrane biogenesis; lipopolysaccharide biosynthesis. Translocates 4-amino-4-deoxy-L-arabinose-phosphoundecaprenol (alpha-L-Ara4N-phosphoundecaprenol) from the cytoplasmic to the periplasmic side of the inner membrane. This chain is Probable 4-amino-4-deoxy-L-arabinose-phosphoundecaprenol flippase subunit ArnF, found in Shigella sonnei (strain Ss046).